The sequence spans 259 residues: Ubiquinone biosynthesis protein COQ4 homolog, mitochondrial (259 aa).

Zn(2+)-binding residues include His-162, Asp-163, His-166, and Glu-178.

It belongs to the COQ4 family. In terms of assembly, component of a multi-subunit COQ enzyme complex. Zn(2+) is required as a cofactor.

Its subcellular location is the mitochondrion inner membrane. It catalyses the reaction a 4-hydroxy-3-methoxy-5-(all-trans-polyprenyl)benzoate + H(+) = a 2-methoxy-6-(all-trans-polyprenyl)phenol + CO2. Its pathway is cofactor biosynthesis; ubiquinone biosynthesis. Lyase that catalyzes the C1-decarboxylation of 4-hydroxy-3-methoxy-5-(all-trans-polyprenyl)benzoic acid into 2-methoxy-6-(all-trans-polyprenyl)phenol during ubiquinone biosynthesis. This chain is Ubiquinone biosynthesis protein COQ4 homolog, mitochondrial, found in Bombyx mori (Silk moth).